The following is a 1013-amino-acid chain: Putative helicase mov-10-B.1 (1013 aa).

Polar residues-rich tracts occupy residues 91–103 and 113–123; these read QWSRPYRSQQNHA and RPSTTRVSDPS. Residues 91-129 form a disordered region; that stretch reads QWSRPYRSQQNHATPHLNDAISRPSTTRVSDPSSVPEPE. 550–557 serves as a coordination point for ATP; that stretch reads GPPGTGKT. A DEAG box motif is present at residues 672–675; sequence DEAG.

Belongs to the DNA2/NAM7 helicase family. SDE3 subfamily.

The protein localises to the cytoplasm. It localises to the P-body. The catalysed reaction is ATP + H2O = ADP + phosphate + H(+). Its function is as follows. Probable RNA helicase. Required for RNA-mediated gene silencing by the RNA-induced silencing complex (RISC). Required for both miRNA-mediated translational repression and miRNA-mediated cleavage of complementary mRNAs by RISC. The polypeptide is Putative helicase mov-10-B.1 (mov10b.1) (Danio rerio (Zebrafish)).